The following is a 183-amino-acid chain: Gamma-crystallin N-A (183 aa).

Beta/gamma crystallin 'Greek key' domains lie at 6–46 (GKIV…RVES), 47–89 (GAWV…KPIK), 95–136 (YRME…KVYG), and 138–180 (GAWA…RRVV).

The protein belongs to the beta/gamma-crystallin family. In terms of assembly, monomer.

Crystallins are the dominant structural components of the vertebrate eye lens. The polypeptide is Gamma-crystallin N-A (crygna) (Danio rerio (Zebrafish)).